The primary structure comprises 138 residues: Acidic phospholipase A2 Ts-A3 (138 aa).

Positions 1–16 are cleaved as a signal peptide; sequence MRTLWIMAVLLLGVEG. 7 cysteine pairs are disulfide-bonded: Cys-42–Cys-132, Cys-44–Cys-60, Cys-59–Cys-111, Cys-65–Cys-138, Cys-66–Cys-104, Cys-73–Cys-97, and Cys-91–Cys-102. Residues Tyr-43, Gly-45, and Gly-47 each contribute to the Ca(2+) site. His-63 is a catalytic residue. A Ca(2+)-binding site is contributed by Asp-64. Asp-105 is a catalytic residue.

The cofactor is Ca(2+). As to expression, expressed by the venom gland.

It localises to the secreted. It carries out the reaction a 1,2-diacyl-sn-glycero-3-phosphocholine + H2O = a 1-acyl-sn-glycero-3-phosphocholine + a fatty acid + H(+). Snake venom phospholipase A2 (PLA2) that shows a moderate inhibition of ADP-induced human platelet aggregation when tested on platelet rich plasma. Exhibits high hydrolytic activities and prefers the anionic micelles (dPPC with deoxycholate) to the zwitterionic micelles (dPPC with Triton X-100). PLA2 catalyzes the calcium-dependent hydrolysis of the 2-acyl groups in 3-sn-phosphoglycerides. The chain is Acidic phospholipase A2 Ts-A3 from Trimeresurus stejnegeri (Chinese green tree viper).